Reading from the N-terminus, the 121-residue chain is Small ribosomal subunit protein uS13 (121 aa).

Positions 91-121 (HRRGLPVRGQKTKNNARTRKGPVKTVANKKK) are disordered.

Belongs to the universal ribosomal protein uS13 family. In terms of assembly, part of the 30S ribosomal subunit. Forms a loose heterodimer with protein S19. Forms two bridges to the 50S subunit in the 70S ribosome.

Functionally, located at the top of the head of the 30S subunit, it contacts several helices of the 16S rRNA. In the 70S ribosome it contacts the 23S rRNA (bridge B1a) and protein L5 of the 50S subunit (bridge B1b), connecting the 2 subunits; these bridges are implicated in subunit movement. Contacts the tRNAs in the A and P-sites. The sequence is that of Small ribosomal subunit protein uS13 from Staphylococcus haemolyticus (strain JCSC1435).